A 357-amino-acid polypeptide reads, in one-letter code: Naringenin,2-oxoglutarate 3-dioxygenase (357 aa).

In terms of domain architecture, Fe2OG dioxygenase spans 189–293 (CVDMDQKIVV…RLSIATFQNP (105 aa)). Positions 216, 218, and 274 each coordinate Fe cation. R284 is a 2-oxoglutarate binding site.

Belongs to the iron/ascorbate-dependent oxidoreductase family. Fe(2+) is required as a cofactor. It depends on L-ascorbate as a cofactor.

The enzyme catalyses a (2S)-flavan-4-one + 2-oxoglutarate + O2 = a (2R,3R)-dihydroflavonol + succinate + CO2. It participates in secondary metabolite biosynthesis; flavonoid biosynthesis. In terms of biological role, catalyzes the 3-beta-hydroxylation of 2S-flavanones to 2R,3R-dihydroflavonols which are intermediates in the biosynthesis of flavonols, anthocyanidins, catechins and proanthocyanidins in plants. This is Naringenin,2-oxoglutarate 3-dioxygenase (FHT) from Matthiola incana (Common stock).